Reading from the N-terminus, the 33-residue chain is Mu-theraphotoxin-Osp1b (33 aa).

Intrachain disulfides connect Cys-2–Cys-17, Cys-9–Cys-22, and Cys-16–Cys-29.

It belongs to the neurotoxin 10 (Hwtx-1) family. 22 (Htx-4) subfamily. As to expression, expressed by the venom gland.

It is found in the secreted. Voltage-gated sodium channel Nav1.7/SCN9A inhibitor. The protein is Mu-theraphotoxin-Osp1b of Orphnaecus sp. (strain Maanghit-Cave/Philippines) (Tarantula spider).